Reading from the N-terminus, the 247-residue chain is Adenosylcobinamide-GDP ribazoletransferase (247 aa).

The next 5 helical transmembrane spans lie at 34–54 (IITF…VFMV), 59–79 (CGAP…TGGF), 113–133 (GGLA…ELAL), 138–158 (ILAS…LLMY), and 194–214 (VLLP…AIFI).

It belongs to the CobS family. Mg(2+) serves as cofactor.

Its subcellular location is the cell inner membrane. It carries out the reaction alpha-ribazole + adenosylcob(III)inamide-GDP = adenosylcob(III)alamin + GMP + H(+). The catalysed reaction is alpha-ribazole 5'-phosphate + adenosylcob(III)inamide-GDP = adenosylcob(III)alamin 5'-phosphate + GMP + H(+). It functions in the pathway cofactor biosynthesis; adenosylcobalamin biosynthesis; adenosylcobalamin from cob(II)yrinate a,c-diamide: step 7/7. In terms of biological role, joins adenosylcobinamide-GDP and alpha-ribazole to generate adenosylcobalamin (Ado-cobalamin). Also synthesizes adenosylcobalamin 5'-phosphate from adenosylcobinamide-GDP and alpha-ribazole 5'-phosphate. This chain is Adenosylcobinamide-GDP ribazoletransferase, found in Escherichia coli O157:H7.